The chain runs to 128 residues: Protein Wnt-8 (128 aa).

Residue serine 1 is the site of O-palmitoleoyl serine attachment. Intrachain disulfides connect cysteine 71-cysteine 109 and cysteine 87-cysteine 102. Residues asparagine 74 and asparagine 93 are each glycosylated (N-linked (GlcNAc...) asparagine).

Belongs to the Wnt family. Palmitoleoylation is required for efficient binding to frizzled receptors. Depalmitoleoylation leads to Wnt signaling pathway inhibition. Post-translationally, proteolytic processing by tiki1 and tiki2 promotes oxidation and formation of large disulfide-bond oligomers, leading to inactivation of wnt8.

The protein resides in the secreted. It is found in the extracellular space. The protein localises to the extracellular matrix. Its function is as follows. Ligand for members of the frizzled family of seven transmembrane receptors. Probable developmental protein. May be a signaling molecule which affects the development of discrete regions of tissues. Is likely to signal over only few cell diameters. The chain is Protein Wnt-8 (wnt8) from Thunnus thynnus (Atlantic bluefin tuna).